A 241-amino-acid polypeptide reads, in one-letter code: MGKTMFKKTLLFFTALFFAALCAFSANADVIITGTRVIYPAGQKNVIVKLENNDDSAALVQAWIDNGNPNADPKYTKTPFVITPPVARVEAKSGQSLRITFTGSEPLPDDRESLFYFNLLDIPPKPDAAFLAKHGSFMQIAIRSRLKLFYRPAKLSMDSRDAMKKVVFKATPEGVLVDNQTPYYMNYIGLLHQNKPAKNVKMVAPFSQAVFEAKGVRSGDKLKWVLVNDYGADQEGEAIAQ.

A signal peptide spans 1-27 (MGKTMFKKTLLFFTALFFAALCAFSAN).

Belongs to the periplasmic pilus chaperone family.

Its subcellular location is the periplasm. In terms of biological role, mediates assembly of pili by forming soluble multimeric complexes with pili subunits as an intermediate step in the assembly process. This protein is involved in type B pili (HifA) assembly. The polypeptide is Chaperone protein HifB (hifB) (Haemophilus influenzae).